Here is a 291-residue protein sequence, read N- to C-terminus: ATP synthase gamma chain (291 aa).

This sequence belongs to the ATPase gamma chain family. F-type ATPases have 2 components, CF(1) - the catalytic core - and CF(0) - the membrane proton channel. CF(1) has five subunits: alpha(3), beta(3), gamma(1), delta(1), epsilon(1). CF(0) has three main subunits: a, b and c.

The protein localises to the cell membrane. Its function is as follows. Produces ATP from ADP in the presence of a proton gradient across the membrane. The gamma chain is believed to be important in regulating ATPase activity and the flow of protons through the CF(0) complex. The protein is ATP synthase gamma chain of Buchnera aphidicola subsp. Schizaphis graminum (strain Sg).